The following is a 428-amino-acid chain: Serine--tRNA ligase (428 aa).

Residue 231–233 (TAE) coordinates L-serine. Residue 262-264 (RSE) coordinates ATP. Glu-285 contacts L-serine. ATP is bound at residue 349–352 (EISS). Residue Ser-385 coordinates L-serine.

This sequence belongs to the class-II aminoacyl-tRNA synthetase family. Type-1 seryl-tRNA synthetase subfamily. In terms of assembly, homodimer. The tRNA molecule binds across the dimer.

The protein localises to the cytoplasm. It carries out the reaction tRNA(Ser) + L-serine + ATP = L-seryl-tRNA(Ser) + AMP + diphosphate + H(+). The catalysed reaction is tRNA(Sec) + L-serine + ATP = L-seryl-tRNA(Sec) + AMP + diphosphate + H(+). It participates in aminoacyl-tRNA biosynthesis; selenocysteinyl-tRNA(Sec) biosynthesis; L-seryl-tRNA(Sec) from L-serine and tRNA(Sec): step 1/1. Its function is as follows. Catalyzes the attachment of serine to tRNA(Ser). Is also able to aminoacylate tRNA(Sec) with serine, to form the misacylated tRNA L-seryl-tRNA(Sec), which will be further converted into selenocysteinyl-tRNA(Sec). The polypeptide is Serine--tRNA ligase (Staphylococcus aureus (strain USA300)).